The following is a 361-amino-acid chain: tRNA-specific 2-thiouridylase MnmA (361 aa).

ATP is bound by residues 8-15 (AMSGGVDS) and M34. The Nucleophile role is filled by C104. A disulfide bridge links C104 with C202. G128 provides a ligand contact to ATP. The segment at 152–154 (KDQ) is interaction with tRNA. The Cysteine persulfide intermediate role is filled by C202. The tract at residues 307–308 (RY) is interaction with tRNA.

This sequence belongs to the MnmA/TRMU family.

It is found in the cytoplasm. It carries out the reaction S-sulfanyl-L-cysteinyl-[protein] + uridine(34) in tRNA + AH2 + ATP = 2-thiouridine(34) in tRNA + L-cysteinyl-[protein] + A + AMP + diphosphate + H(+). Its function is as follows. Catalyzes the 2-thiolation of uridine at the wobble position (U34) of tRNA, leading to the formation of s(2)U34. The sequence is that of tRNA-specific 2-thiouridylase MnmA from Caldicellulosiruptor saccharolyticus (strain ATCC 43494 / DSM 8903 / Tp8T 6331).